Consider the following 273-residue polypeptide: Formamidopyrimidine-DNA glycosylase (273 aa).

Pro2 functions as the Schiff-base intermediate with DNA in the catalytic mechanism. Glu3 serves as the catalytic Proton donor. Lys58 (proton donor; for beta-elimination activity) is an active-site residue. Positions 91 and 110 each coordinate DNA. The FPG-type zinc-finger motif lies at 238–272 (QVYGKTGQPCPRCASMIVKIKLGGRGTHLCPHCQK). Arg262 serves as the catalytic Proton donor; for delta-elimination activity.

The protein belongs to the FPG family. Monomer. The cofactor is Zn(2+).

It catalyses the reaction Hydrolysis of DNA containing ring-opened 7-methylguanine residues, releasing 2,6-diamino-4-hydroxy-5-(N-methyl)formamidopyrimidine.. The catalysed reaction is 2'-deoxyribonucleotide-(2'-deoxyribose 5'-phosphate)-2'-deoxyribonucleotide-DNA = a 3'-end 2'-deoxyribonucleotide-(2,3-dehydro-2,3-deoxyribose 5'-phosphate)-DNA + a 5'-end 5'-phospho-2'-deoxyribonucleoside-DNA + H(+). Its function is as follows. Involved in base excision repair of DNA damaged by oxidation or by mutagenic agents. Acts as a DNA glycosylase that recognizes and removes damaged bases. Has a preference for oxidized purines, such as 7,8-dihydro-8-oxoguanine (8-oxoG). Has AP (apurinic/apyrimidinic) lyase activity and introduces nicks in the DNA strand. Cleaves the DNA backbone by beta-delta elimination to generate a single-strand break at the site of the removed base with both 3'- and 5'-phosphates. The sequence is that of Formamidopyrimidine-DNA glycosylase from Streptococcus thermophilus (strain CNRZ 1066).